A 464-amino-acid chain; its full sequence is Alpha-amylase (464 aa).

A signal peptide spans 1-21 (MKNTAGILAIAGMLIAPLAHA). Histidine 107 and arginine 213 together coordinate substrate. The active-site Nucleophile is the aspartate 215. Residue 218 to 219 (KH) participates in substrate binding. Glutamate 242 functions as the Proton donor in the catalytic mechanism. Glycine 247 and histidine 313 together coordinate substrate.

Belongs to the glycosyl hydrolase 13 family.

The protein resides in the secreted. The enzyme catalyses Endohydrolysis of (1-&gt;4)-alpha-D-glucosidic linkages in polysaccharides containing three or more (1-&gt;4)-alpha-linked D-glucose units.. The polypeptide is Alpha-amylase (Aeromonas hydrophila).